We begin with the raw amino-acid sequence, 101 residues long: uncharacterized protein (101 aa).

This is an uncharacterized protein from Encephalitozoon cuniculi (strain GB-M1) (Microsporidian parasite).